Here is a 23-residue protein sequence, read N- to C-terminus: Thymidine phosphorylase (23 aa).

Belongs to the thymidine/pyrimidine-nucleoside phosphorylase family. In terms of assembly, homodimer.

The catalysed reaction is thymidine + phosphate = 2-deoxy-alpha-D-ribose 1-phosphate + thymine. In terms of biological role, the enzymes which catalyze the reversible phosphorolysis of pyrimidine nucleosides are involved in the degradation of these compounds and in their utilization as carbon and energy sources, or in the rescue of pyrimidine bases for nucleotide synthesis. This Lacticaseibacillus rhamnosus (Lactobacillus rhamnosus) protein is Thymidine phosphorylase (deoA).